Here is a 208-residue protein sequence, read N- to C-terminus: Imidazoleglycerol-phosphate dehydratase (208 aa).

Residues 1–20 (MSRRATVKAPRAGAAARRGA) form a disordered region. Residues 7–19 (VKAPRAGAAARRG) are compositionally biased toward low complexity.

Belongs to the imidazoleglycerol-phosphate dehydratase family.

It is found in the cytoplasm. The enzyme catalyses D-erythro-1-(imidazol-4-yl)glycerol 3-phosphate = 3-(imidazol-4-yl)-2-oxopropyl phosphate + H2O. It participates in amino-acid biosynthesis; L-histidine biosynthesis; L-histidine from 5-phospho-alpha-D-ribose 1-diphosphate: step 6/9. This chain is Imidazoleglycerol-phosphate dehydratase, found in Anaeromyxobacter sp. (strain K).